The following is a 696-amino-acid chain: Methionine--tRNA ligase (696 aa).

Positions 12-22 (PYANGAIHLGH) match the 'HIGH' region motif. Residues Cys143, Cys146, Cys156, and Cys159 each coordinate Zn(2+). The 'KMSKS' region signature appears at 336-340 (KMSKS). Lys339 serves as a coordination point for ATP. The segment at 556 to 580 (SLAPAPEAQSQQRHAEHQQNEVTAE) is disordered. Residues 591-696 (DFMKVDLRIV…SGAQPGMRVK (106 aa)) form the tRNA-binding domain.

The protein belongs to the class-I aminoacyl-tRNA synthetase family. MetG type 1 subfamily. Homodimer. Zn(2+) is required as a cofactor.

The protein resides in the cytoplasm. The catalysed reaction is tRNA(Met) + L-methionine + ATP = L-methionyl-tRNA(Met) + AMP + diphosphate. Functionally, is required not only for elongation of protein synthesis but also for the initiation of all mRNA translation through initiator tRNA(fMet) aminoacylation. This Dechloromonas aromatica (strain RCB) protein is Methionine--tRNA ligase.